A 1057-amino-acid chain; its full sequence is Collagen alpha-1(I) chain (1057 aa).

Glutamine 1 carries the pyrrolidone carboxylic acid modification. A compositionally biased stretch (basic and acidic residues) spans 1–10; that stretch reads QLSYGYDEKS. Residues 1–17 are nonhelical region (N-terminal); that stretch reads QLSYGYDEKSAGGISVP. Positions 1 to 1057 are disordered; the sequence is QLSYGYDEKS…AHDGGRYYRA (1057 aa). Lysine 9 carries the post-translational modification Allysine. The residue at position 10 (serine 10) is a Phosphoserine. Collagen-like domains follow at residues 18–76, 75–134, 135–193, and 195–252; these read GPMG…EAGK, GKPG…PGEN, GAPG…AKGE, and GPQG…GFPG. The tract at residues 18-1031 is triple-helical region; that stretch reads GPMGPSGPRG…PGPPGPPGPP (1014 aa). 11 positions are modified to 4-hydroxyproline: proline 29, proline 32, proline 35, proline 44, proline 47, proline 50, proline 65, proline 80, proline 86, proline 95, and proline 101. Positions 37–56 are enriched in low complexity; that stretch reads PQGFQGPPGEPGEPGASGPM. Basic and acidic residues predominate over residues 68 to 82; sequence NGDDGEAGKPGRPGE. Position 104 is a 5-hydroxylysine; alternate (lysine 104). The O-linked (Gal...) hydroxylysine; alternate glycan is linked to lysine 104. Serine 110 is modified (phosphoserine). Low complexity predominate over residues 118 to 134; sequence DAGPAGPKGEPGSPGEN. A 4-hydroxyproline mark is found at proline 128, proline 131, proline 137, proline 146, and proline 152. Over residues 157 to 170 the composition is skewed to low complexity; the sequence is PAGARGNDGATGAA. Over residues 172 to 184 the composition is skewed to pro residues; sequence PPGPTGPAGPPGF. A 4-hydroxyproline mark is found at proline 173, proline 182, proline 185, proline 212, proline 215, proline 227, proline 233, proline 242, proline 248, proline 251, and proline 266. The span at 218 to 269 shows a compositional bias: low complexity; it reads AGAAGPAGNPGADGQPGAKGANGAPGIAGAPGFPGARGPAGPQGPSGAPGPK. A 5-hydroxylysine modification is found at lysine 269. 4-hydroxyproline is present on residues proline 275, proline 278, proline 290, proline 292, proline 299, proline 314, proline 320, proline 323, proline 329, and proline 335. Low complexity predominate over residues 287-296; it reads KGEPGPIGIQ. Positions 324–333 are enriched in gly residues; sequence GERGGPGSRG. A 5-hydroxylysine modification is found at lysine 344. A 4-hydroxyproline mark is found at proline 353, proline 362, proline 368, proline 374, proline 383, proline 386, proline 395, proline 404, proline 410, proline 422, proline 431, proline 440, proline 443, proline 461, proline 479, proline 485, proline 491, proline 497, proline 503, proline 509, proline 521, proline 530, proline 542, proline 554, proline 557, proline 563, proline 569, and proline 578. The segment covering 377–403 has biased composition (low complexity); it reads KGLTGSPGSPGPDGKTGPPGPAGQDGR. Residues 412 to 431 show a composition bias toward low complexity; sequence ARGQAGVMGFPGPKGAAGEP. Residues 473–500 are compositionally biased toward low complexity; the sequence is QGPAGSPGFQGLPGPAGPPGEAGKPGEQ. Collagen-like domains are found at residues 522–579 and 555–613; these read GERG…GLPG and GAPG…PPGP. Over residues 539 to 566 the composition is skewed to low complexity; that stretch reads NGAPGNDGAKGDAGAPGAPGSQGAPGLQ. At lysine 590 the chain carries 5-hydroxylysine. Proline 596, proline 611, and proline 617 each carry 4-hydroxyproline. Collagen-like domains lie at 618–676 and 678–736; these read GDKG…AKGD and GPPG…PPGP. A compositionally biased stretch (low complexity) spans 623 to 637; sequence AGPSGPAGPTGARGA. Serine 626 carries the phosphoserine modification. 4-hydroxyproline occurs at positions 638, 644, 647, 656, 662, 680, 689, and 698. Over residues 650 to 677 the composition is skewed to low complexity; sequence AGFAGPPGADGQPGAKGEPGDAGAKGDA. At lysine 701 the chain carries 5-hydroxylysine. Residues 706–722 are compositionally biased toward low complexity; the sequence is SAGPPGATGFPGAAGRV. Residues proline 710 and proline 716 each carry the 4-hydroxyproline modification. Residue proline 724 is modified to 3-hydroxyproline. Residues proline 725, proline 734, proline 737, proline 758, proline 764, proline 767, proline 776, and proline 785 each carry the 4-hydroxyproline modification. Residues 751-760 are compositionally biased toward low complexity; the sequence is ETGPAGRPGE. The segment covering 770 to 785 has biased composition (low complexity); it reads AGEKGSPGADGPAGAP. Gly residues predominate over residues 789–798; it reads GPQGIGGQRG. Proline 803, proline 812, proline 815, proline 821, proline 836, proline 842, proline 848, proline 857, proline 863, and proline 869 each carry 4-hydroxyproline. Residues 804 to 861 form the Collagen-like 9 domain; it reads GQRGERGFPGLPGPSGEPGKQGPSGSSGERGPPGPAGPPGLAGPPGESGREGAPGAEG. Residues 835–845 show a composition bias toward pro residues; sequence PPGPAGPPGLA. 5-hydroxylysine is present on lysine 872. Residues 881–896 are compositionally biased toward pro residues; sequence SGPPGAPGAPGAPGPV. A 4-hydroxyproline mark is found at proline 884, proline 887, and proline 890. Low complexity predominate over residues 917–931; sequence AGPAGVRGPAGPQGP. Collagen-like domains lie at 918–976 and 972–1030; these read GPAG…ASGP and GASG…PPGP. The segment covering 932 to 946 has biased composition (basic and acidic residues); it reads RGDKGETGEQGDRGL. Lysine 935 is modified (5-hydroxylysine). Lysine 947 carries the post-translational modification 5-hydroxylysine; alternate. A glycan (O-linked (Gal...) hydroxylysine; alternate) is linked at lysine 947. 4-hydroxyproline occurs at positions 959, 962, 965, 983, 998, and 1001. Residues 965–997 show a composition bias toward low complexity; the sequence is PGEQGPSGASGPAGPRGPPGSAGAPGKDGLNGL. Proline 1003 carries the post-translational modification 3-hydroxyproline. Proline 1004 bears the 4-hydroxyproline mark. The span at 1016–1031 shows a compositional bias: pro residues; the sequence is VGPPGPPGPPGPPGPP. Proline 1018 carries the 3-hydroxyproline modification. Proline 1019 carries the 4-hydroxyproline modification. Proline 1021 bears the 3-hydroxyproline mark. Proline 1022 bears the 4-hydroxyproline mark. Residue proline 1024 is modified to 3-hydroxyproline. Proline 1025, proline 1028, and proline 1031 each carry 4-hydroxyproline. The nonhelical region (C-terminal) stretch occupies residues 1032–1055; it reads SGAFDFSFLPQPPQEKAHDGGRYY. A compositionally biased stretch (basic and acidic residues) spans 1046–1057; sequence EKAHDGGRYYRA. Lysine 1047 carries the allysine modification.

It belongs to the fibrillar collagen family. As to quaternary structure, trimers of one alpha 2(I) and two alpha 1(I) chains. Post-translationally, contains mostly 4-hydroxyproline. Proline residues at the third position of the tripeptide repeating unit (G-X-Y) are hydroxylated in some or all of the chains. In terms of processing, contains 3-hydroxyproline at a few sites. This modification occurs on the first proline residue in the sequence motif Gly-Pro-Hyp, where Hyp is 4-hydroxyproline. Lysine residues at the third position of the tripeptide repeating unit (G-X-Y) are 5-hydroxylated in some or all of the chains. Post-translationally, O-glycosylated on hydroxylated lysine residues. The O-linked glycan consists of a Glc-Gal disaccharide.

The protein localises to the secreted. It localises to the extracellular space. The protein resides in the extracellular matrix. In terms of biological role, type I collagen is a member of group I collagen (fibrillar forming collagen). The protein is Collagen alpha-1(I) chain (COL1A1) of Mammut americanum (American mastodon).